The following is a 249-amino-acid chain: 5'-nucleotidase SurE (249 aa).

The a divalent metal cation site is built by D8, D9, S39, and N91.

The protein belongs to the SurE nucleotidase family. The cofactor is a divalent metal cation.

It localises to the cytoplasm. It carries out the reaction a ribonucleoside 5'-phosphate + H2O = a ribonucleoside + phosphate. In terms of biological role, nucleotidase that shows phosphatase activity on nucleoside 5'-monophosphates. This is 5'-nucleotidase SurE from Haemophilus influenzae (strain PittEE).